Here is a 288-residue protein sequence, read N- to C-terminus: MKILIAEYAGFCFGVKRAIETAYQEIEKGDGKKIYTLGEIIHNPQVISDLSKKGVNVIEEEELDKLTEGDKLIIRSHGVSKKLYDFLAKKGVEVIDVTCPFVKKVQNIVYEYYHKGYSIIIVGDRNHPEVIGVNGWCDDTAYVVNSIEEAYELPQLEKACAVAQTTLIEKHWKDILEVIKLKVKDLIFFNTICDATQKRQDAADELSKKVDVMFVIGGKHSSNTQKLKKICEKNCKNTFHIEDAEELTLEMVKDHEIIGVTAGASTPDYVIEDVIKKIRFLKGEDGDE.

C12 lines the [4Fe-4S] cluster pocket. Residues H42 and H77 each contribute to the (2E)-4-hydroxy-3-methylbut-2-enyl diphosphate site. Dimethylallyl diphosphate is bound by residues H42 and H77. 2 residues coordinate isopentenyl diphosphate: H42 and H77. A [4Fe-4S] cluster-binding site is contributed by C99. H127 is a binding site for (2E)-4-hydroxy-3-methylbut-2-enyl diphosphate. Residue H127 coordinates dimethylallyl diphosphate. Residue H127 participates in isopentenyl diphosphate binding. The active-site Proton donor is E129. T165 serves as a coordination point for (2E)-4-hydroxy-3-methylbut-2-enyl diphosphate. Position 193 (C193) interacts with [4Fe-4S] cluster. (2E)-4-hydroxy-3-methylbut-2-enyl diphosphate is bound by residues S221, S222, N223, and S265. Dimethylallyl diphosphate-binding residues include S221, S222, N223, and S265. Isopentenyl diphosphate contacts are provided by S221, S222, N223, and S265.

The protein belongs to the IspH family. The cofactor is [4Fe-4S] cluster.

It catalyses the reaction isopentenyl diphosphate + 2 oxidized [2Fe-2S]-[ferredoxin] + H2O = (2E)-4-hydroxy-3-methylbut-2-enyl diphosphate + 2 reduced [2Fe-2S]-[ferredoxin] + 2 H(+). The enzyme catalyses dimethylallyl diphosphate + 2 oxidized [2Fe-2S]-[ferredoxin] + H2O = (2E)-4-hydroxy-3-methylbut-2-enyl diphosphate + 2 reduced [2Fe-2S]-[ferredoxin] + 2 H(+). It functions in the pathway isoprenoid biosynthesis; dimethylallyl diphosphate biosynthesis; dimethylallyl diphosphate from (2E)-4-hydroxy-3-methylbutenyl diphosphate: step 1/1. The protein operates within isoprenoid biosynthesis; isopentenyl diphosphate biosynthesis via DXP pathway; isopentenyl diphosphate from 1-deoxy-D-xylulose 5-phosphate: step 6/6. Functionally, catalyzes the conversion of 1-hydroxy-2-methyl-2-(E)-butenyl 4-diphosphate (HMBPP) into a mixture of isopentenyl diphosphate (IPP) and dimethylallyl diphosphate (DMAPP). Acts in the terminal step of the DOXP/MEP pathway for isoprenoid precursor biosynthesis. This is 4-hydroxy-3-methylbut-2-enyl diphosphate reductase from Thermoanaerobacter pseudethanolicus (strain ATCC 33223 / 39E) (Clostridium thermohydrosulfuricum).